Here is a 712-residue protein sequence, read N- to C-terminus: Lactoperoxidase (712 aa).

The first 26 residues, 1–26 (MRVLLHLPALLASLILLQAAASTTRA), serve as a signal peptide directing secretion. Positions 27-80 (QTTRTSAISDTVSQAKVQVNKAFLDSRTRLKTAMSSETPTSRQLSEYLKHAKGR) are excised as a propeptide. The N-linked (GlcNAc...) asparagine glycan is linked to N106. A disulfide bridge connects residues C132 and C145. N212 is a glycosylation site (N-linked (GlcNAc...) asparagine). Residue D225 participates in heme b binding. H226 functions as the Proton acceptor in the catalytic mechanism. A Ca(2+)-binding site is contributed by D227. Intrachain disulfides connect C246/C256 and C250/C274. T301, F303, D305, and S307 together coordinate Ca(2+). A Phosphoserine modification is found at S315. N-linked (GlcNAc...) asparagine glycans are attached at residues N322 and N358. The cysteines at positions 354 and 365 are disulfide-linked. E375 and H468 together coordinate heme b. Y482 carries the 3'-nitrotyrosine modification. Intrachain disulfides connect C573-C630 and C671-C696.

It belongs to the peroxidase family. XPO subfamily. Ca(2+) serves as cofactor. Requires heme b as cofactor. As to expression, mammary gland, milk and salivary gland. Found in bronchial submucosal glands.

The protein localises to the secreted. Its subcellular location is the cytoplasm. The enzyme catalyses 2 a phenolic donor + H2O2 = 2 a phenolic radical donor + 2 H2O. It catalyses the reaction thiocyanate + H2O2 + H(+) = hypothiocyanous acid + H2O. The catalysed reaction is iodide + H2O2 = hypoiodite + H2O. In terms of biological role, heme-containing oxidoreductase which catalyzes the conversion of thiocyanate (SCN(-)) into antimicrobial agent hypothiocyanous acid (OSCN(-)) in the presence of hydrogen peroxide (H2O2). Also involved in the conversion of iodide (I(-)) into hypoiodite (IO(-)) in the presence of H2O2. Responsible for the inactivation of a wide range of micro-organisms and hence, important component of defense mechanism. Shows antibacterial properties against Pseudomonas aeruginosa. The lactoperoxidase-SCN(-)-H2O2 system shows antibacterial properties against Burkholderia cepacia and Haemophilus influenzae in vitro. Present in mammary and salivary gland secretions and may contribute to airway host defense against infection. May contribute to maintaining an appropriate H2O2 cellular level, therefore protecting cells from H2O2-caused injuries and inflammation. This is Lactoperoxidase from Homo sapiens (Human).